The chain runs to 324 residues: uncharacterized protein (324 aa).

Residues 1–11 (MNTNINVNGSN) show a composition bias toward polar residues. 3 disordered regions span residues 1–77 (MNTN…YSYS), 132–194 (NNHY…NNNN), and 272–324 (DENI…DNDS). A compositionally biased stretch (low complexity) spans 21-64 (NENNNNNNGRNNNTNNNNNGRYNNNNNNNNNNNNNNYNLNMNST). The segment covering 279 to 324 (SNNNNNNNNNNNNSYNVNICRNNSNFNVNENNGGDNNNDNNNDNDS) has biased composition (low complexity).

This is an uncharacterized protein from Dictyostelium discoideum (Social amoeba).